A 417-amino-acid polypeptide reads, in one-letter code: Cysteate synthase (417 aa).

Lysine 104 carries the post-translational modification N6-(pyridoxal phosphate)lysine. Pyridoxal 5'-phosphate contacts are provided by asparagine 131 and threonine 371.

Belongs to the threonine synthase family. Cysteate synthase subfamily. As to quaternary structure, homotrimer. Requires pyridoxal 5'-phosphate as cofactor.

It catalyses the reaction O-phospho-L-serine + sulfite + H(+) = L-cysteate + phosphate. It participates in cofactor biosynthesis; coenzyme M biosynthesis. In terms of biological role, specifically catalyzes the beta-elimination of phosphate from L-phosphoserine and the beta-addition of sulfite to the dehydroalanine intermediate to produce L-cysteate. The protein is Cysteate synthase of Methanococcoides burtonii (strain DSM 6242 / NBRC 107633 / OCM 468 / ACE-M).